The following is a 176-amino-acid chain: Corrinoid adenosyltransferase (176 aa).

ATP-binding positions include 6 to 14 (TRTGDNGTT), lysine 24, 131 to 136 (RRLERI), and asparagine 155.

It belongs to the Cob(I)alamin adenosyltransferase family.

It is found in the cytoplasm. It catalyses the reaction 2 cob(II)yrinate a,c diamide + reduced [electron-transfer flavoprotein] + 2 ATP = 2 adenosylcob(III)yrinate a,c-diamide + 2 triphosphate + oxidized [electron-transfer flavoprotein] + 3 H(+). The enzyme catalyses 2 cob(II)alamin + reduced [electron-transfer flavoprotein] + 2 ATP = 2 adenosylcob(III)alamin + 2 triphosphate + oxidized [electron-transfer flavoprotein] + 3 H(+). The protein operates within cofactor biosynthesis; adenosylcobalamin biosynthesis; adenosylcobalamin from cob(II)yrinate a,c-diamide: step 2/7. The chain is Corrinoid adenosyltransferase from Citrobacter freundii.